A 146-amino-acid chain; its full sequence is Protein MGF 100-3L (146 aa).

It belongs to the asfivirus MGF 100 family.

Its function is as follows. Plays a role in virus cell tropism, and may be required for efficient virus replication in macrophages. The polypeptide is Protein MGF 100-3L (Ornithodoros (relapsing fever ticks)).